The following is a 398-amino-acid chain: MANHHNAEIEEIRNRQRAQGPANILAIGTATPSNCVYQADYPDYYFRITNSEHMTDLKLKFKRMCEKSMIRKRYMHITEEYLKENPNVCAYEAPSLDARQDLVVVEVPRLGKEAASKAIKEWGQPKSKITHLIFCTTSGVDMPGADYQLTKLLGLRPSVKRFMMYQQGCFAGGTVLRLAKDLAENNAGARVLVVCSEITAVTFRGPSDSHLDSLVGQALFGDGAAAVILGSDPDLSVERPLFQLISAAQTILPDSDGAIDGHLREVGLTFHLLKDVPGLISKNIEKSLKEAFGPIGISDWNSLFWIAHPGGPAILDQVELKLGLKEEKMRATRQVLSDYGNMSSACVLFILDEMRKKSIEEGKATTGEGLDWGVLFGFGPGLTVETVVLHSVPATFTH.

Cys169 is a catalytic residue.

The protein belongs to the thiolase-like superfamily. Chalcone/stilbene synthases family.

It carries out the reaction (E)-4-coumaroyl-CoA + 3 malonyl-CoA + 3 H(+) = 2',4,4',6'-tetrahydroxychalcone + 3 CO2 + 4 CoA. It functions in the pathway secondary metabolite biosynthesis; flavonoid biosynthesis. Functionally, the primary product of this enzyme is 4,2',4',6'-tetrahydroxychalcone (also termed naringenin-chalcone or chalcone) which can under specific conditions spontaneously isomerize into naringenin. This Petroselinum crispum (Parsley) protein is Chalcone synthase (CHS).